The following is a 728-amino-acid chain: MSDRIDRDVINALIAGHFADPFSVLGMHKTTAGLEVRALLPDATDVWVIEPKTGRKLAKLECLDSRGFFSGVIPRRKNFFRYQLAVVWHGQQNLIDDPYRFGPLIQEMDAWLLSEGTHLRPYETLGAHADTMDGVTGTRFSVWAPNARRVSVVGQFNYWDGRRHPMRLRKESGIWELFIPGAHNGQLYKYEMIDANGNLRLKSDPYAFEAQMRPETASLICGLPEKVVQTEERKKANQFDAPISIYEVHLGSWRRHTDNNFWLSYRELADQLVPYAKWMGFTHLELLPINEHPFDGSWGYQPTGLYAPTRRFGTRDDFRYFIDAAHAAGLNVILDWVPGHFPTDDFALAEFDGTNLYEHSDPREGYHQDWNTLIYNYGRREVSNFLVGNALYWIERFGIDALRVDAVASMIYRDYSRKEGEWIPNEFGGRENLEAIEFLRNTNRILGEQVSGAVTMAEESTDFPGVSRPQDMGGLGFWYKWNLGWMHDTLDYMKLDPIYRQYHHDKLTFGMLYNYTENFVLPLSHDEVVHGKKSILDRMPGDAWQKFANLRAYYGWMWAFPGKKLLFMGNEFAQGREWNHDASLDWHLLEGGDNWHHGVQRLVRDLNLTYRHHKAMHELDFDPYGFEWLVVDDKERSVLIFVRRDKEGNEIIVASNFTPVPRHDYRFGINQPGKWREILNTDSMHYHGSNAGNGGAVHSDEIASHGRQHSLSLTLPPLATIWLVREAE.

Aspartate 405 acts as the Nucleophile in catalysis. Glutamate 458 functions as the Proton donor in the catalytic mechanism.

This sequence belongs to the glycosyl hydrolase 13 family. GlgB subfamily. As to quaternary structure, monomer.

It carries out the reaction Transfers a segment of a (1-&gt;4)-alpha-D-glucan chain to a primary hydroxy group in a similar glucan chain.. Its pathway is glycan biosynthesis; glycogen biosynthesis. Functionally, catalyzes the formation of the alpha-1,6-glucosidic linkages in glycogen by scission of a 1,4-alpha-linked oligosaccharide from growing alpha-1,4-glucan chains and the subsequent attachment of the oligosaccharide to the alpha-1,6 position. This is 1,4-alpha-glucan branching enzyme GlgB from Escherichia coli O6:K15:H31 (strain 536 / UPEC).